The sequence spans 82 residues: Small ribosomal subunit protein bS16 (82 aa).

This sequence belongs to the bacterial ribosomal protein bS16 family.

This Proteus mirabilis (strain HI4320) protein is Small ribosomal subunit protein bS16.